The following is a 288-amino-acid chain: 2-hydroxy-6-oxononadienedioate/2-hydroxy-6-oxononatrienedioate hydrolase (288 aa).

In terms of domain architecture, AB hydrolase-1 spans 39-274 (LVLLHGSGPG…RCGHWAQWEH (236 aa)). Residue histidine 268 is the Proton acceptor of the active site.

The protein belongs to the AB hydrolase superfamily. MhpC family. As to quaternary structure, homodimer.

It catalyses the reaction (2Z,4E)-2-hydroxy-6-oxonona-2,4-dienedioate + H2O = (2Z)-2-hydroxypenta-2,4-dienoate + succinate + H(+). The catalysed reaction is (2Z,4E,7E)-2-hydroxy-6-oxonona-2,4,7-trienedioate + H2O = (2Z)-2-hydroxypenta-2,4-dienoate + fumarate + H(+). Its pathway is aromatic compound metabolism; 3-phenylpropanoate degradation. Functionally, catalyzes the cleavage of the C5-C6 bond of 2-hydroxy-6-oxononadienedioate and 2-hydroxy-6-oxononatrienedioate, a dienol ring fission product of the bacterial meta-cleavage pathway for degradation of phenylpropionic acid. The sequence is that of 2-hydroxy-6-oxononadienedioate/2-hydroxy-6-oxononatrienedioate hydrolase from Paraburkholderia phymatum (strain DSM 17167 / CIP 108236 / LMG 21445 / STM815) (Burkholderia phymatum).